A 212-amino-acid chain; its full sequence is Transcriptional regulator GfcR (212 aa).

It belongs to the purine/pyrimidine phosphoribosyltransferase family. GfcR subfamily.

Its function is as follows. DNA-binding transcriptional regulator that functions as a regulator of central sugar catabolic pathways. The chain is Transcriptional regulator GfcR from Halobacterium salinarum (strain ATCC 29341 / DSM 671 / R1).